An 826-amino-acid polypeptide reads, in one-letter code: MTGAEVETGSQAKPDKKPQEEVAGGAERESEAPLVVRPKVRPQAPATSGARPKTETKSSSRARPKTETQSVSGTRHRMSGARPRSEAQLMSGARPKTDARAVGGARPKTEAKPIPGARPKGDAQAWAHSEFGAEAMPRAERAHLSNSVTWPPVNVGSATVTKSKSLSMNTELASMGSEIFSGTQGQPGIEPWFGPREEANMGSWCYPRPRAREETSNESADENSTMSSFWTREETSIRSWPREEVNTRSRHRAKHQTNARSKPRSKQDPYIDSLSGSEDEASNPFCFWAGENTNDMFRARGRDEANARPKIRTKREDYFEDEDEIYKESWLLPGEEGNRFRRRDKEEPNKTLKNENEKDVKNDETVEQESRLEEEVIIGSWFWAEQETNVEAGASAICDAEPGAEEGAIGGSLFWTEEKPSLGAVARDEVRPESEEEALFGSWFWDRDEACFDPNPTPVYTAKSRYRDPEEDLNLASRPKTWDEVTIEFKPPCHGLGFPSPRPFIIPEGASGNSEEKAKNAELGAEGEEQDSVAQRDLPEPEFPFQYDPSYRSVQEIREHLKARESAQPENWSCTCIQCELRISSAEFEELLLLMDRIRDPFIHEIAKIAMGMRTASQFTRDFIRDSGVVSLIEALMNYPSSRVRTNFLENMVHMAPPYPNLNMIETFICQVCEETLSHSVNSPEQLTGMRMLRHLTITTDYHVLIANYVSGFLALLTTGDARTKFHVLKMLLNLSDNPMVAKKLFSAKALSIFVGLFNIEETNDNIQIVIKMFQNISNIVKSGAMSLLDDDFSLEPLVSAFHEFEELAKQLQIQIDNQNDPEEGQ.

Disordered stretches follow at residues 1-126 (MTGA…AQAW), 204-286 (WCYP…NPFC), 336-371 (EGNRFRRRDKEEPNKTLKNENEKDVKNDETVEQESR), and 506-534 (IPEGASGNSEEKAKNAELGAEGEEQDSVA). Over residues 13–31 (KPDKKPQEEVAGGAERESE) the composition is skewed to basic and acidic residues. Residues 59-73 (SSRARPKTETQSVSG) show a composition bias toward polar residues. Residues 231 to 247 (TREETSIRSWPREEVNT) are compositionally biased toward basic and acidic residues. The segment covering 248–264 (RSRHRAKHQTNARSKPR) has biased composition (basic residues). Phosphoserine is present on residues Ser275 and Ser277.

Belongs to the GPRASP family. In terms of assembly, interacts with cytoplasmic tails of a variety of G-protein coupled receptors such as muscarinic acetylcholine receptor M1/CHRM1 and calcitonin receptor/CALCR. Strongly expressed in the brain and the cochlea. Also in lung and muscle tissues. Localized in multiple structures of the cochlea, detected in the spiral ganglion, stria vascularis, spiral ligament, inner and outer hair cells.

Functionally, may play a role in regulation of a variety of G-protein coupled receptors. This Mus musculus (Mouse) protein is G-protein coupled receptor-associated sorting protein 2 (Gprasp2).